We begin with the raw amino-acid sequence, 232 residues long: ATP-dependent dethiobiotin synthetase BioD (232 aa).

16 to 21 (GVGKTV) contributes to the ATP binding site. Thr-20 serves as a coordination point for Mg(2+). Residue Lys-41 is part of the active site. Residue Thr-45 participates in substrate binding. Residues Asp-52, 111–114 (EGIG), 171–172 (NQ), 200–202 (PLS), and Glu-207 each bind ATP. Mg(2+) is bound by residues Asp-52 and Glu-111.

This sequence belongs to the dethiobiotin synthetase family. Homodimer. Mg(2+) is required as a cofactor.

The protein resides in the cytoplasm. It catalyses the reaction (7R,8S)-7,8-diammoniononanoate + CO2 + ATP = (4R,5S)-dethiobiotin + ADP + phosphate + 3 H(+). The enzyme catalyses (7R,8S)-8-amino-7-(carboxyamino)nonanoate + ATP = (4R,5S)-dethiobiotin + ADP + phosphate + H(+). Its pathway is cofactor biosynthesis; biotin biosynthesis; biotin from 7,8-diaminononanoate: step 1/2. Its function is as follows. Catalyzes a mechanistically unusual reaction, the ATP-dependent insertion of CO2 between the N7 and N8 nitrogen atoms of 7,8-diaminopelargonic acid (DAPA, also called 7,8-diammoniononanoate) to form a ureido ring. This archaea does not encode bioA (which catalyzes the formation of the precursor for this reaction in the cannonical pathway), instead it encodes bioU, which replaces bioA and also performs the first half of the cannonical BioD reaction. Thus in this archaea BioD has a different substrate. The polypeptide is ATP-dependent dethiobiotin synthetase BioD (Haloferax mediterranei (strain ATCC 33500 / DSM 1411 / JCM 8866 / NBRC 14739 / NCIMB 2177 / R-4) (Halobacterium mediterranei)).